The chain runs to 138 residues: uncharacterized protein (138 aa).

Disordered regions lie at residues 1 to 23 and 35 to 83; these read MPES…MLSE and ASPS…EDPV. Positions 60–69 are enriched in acidic residues; it reads DEETIPEEDD.

This is an uncharacterized protein from Schizosaccharomyces pombe (strain 972 / ATCC 24843) (Fission yeast).